We begin with the raw amino-acid sequence, 518 residues long: uncharacterized protein (518 aa).

The protein localises to the virion. This is an uncharacterized protein from Acanthamoeba polyphaga (Amoeba).